Reading from the N-terminus, the 432-residue chain is Histidine--tRNA ligase (432 aa).

It belongs to the class-II aminoacyl-tRNA synthetase family.

The protein resides in the cytoplasm. It carries out the reaction tRNA(His) + L-histidine + ATP = L-histidyl-tRNA(His) + AMP + diphosphate + H(+). This is Histidine--tRNA ligase from Pyrococcus furiosus (strain ATCC 43587 / DSM 3638 / JCM 8422 / Vc1).